Reading from the N-terminus, the 417-residue chain is Gamma-glutamyl phosphate reductase (417 aa).

The protein belongs to the gamma-glutamyl phosphate reductase family.

The protein localises to the cytoplasm. The catalysed reaction is L-glutamate 5-semialdehyde + phosphate + NADP(+) = L-glutamyl 5-phosphate + NADPH + H(+). It participates in amino-acid biosynthesis; L-proline biosynthesis; L-glutamate 5-semialdehyde from L-glutamate: step 2/2. In terms of biological role, catalyzes the NADPH-dependent reduction of L-glutamate 5-phosphate into L-glutamate 5-semialdehyde and phosphate. The product spontaneously undergoes cyclization to form 1-pyrroline-5-carboxylate. In Legionella pneumophila subsp. pneumophila (strain Philadelphia 1 / ATCC 33152 / DSM 7513), this protein is Gamma-glutamyl phosphate reductase.